Consider the following 100-residue polypeptide: uncharacterized protein (100 aa).

This is an uncharacterized protein from Haemophilus influenzae (strain ATCC 51907 / DSM 11121 / KW20 / Rd).